The following is a 549-amino-acid chain: Zinc finger protein 18 (549 aa).

Residues 41–123 (RQLFRQFRYQ…TLVESLKGDP (83 aa)) enclose the SCAN box domain. One can recognise a KRAB domain in the interval 211–283 (DLGASLLPAA…YLHVNEKIPR (73 aa)). 5 C2H2-type zinc fingers span residues 408–430 (PTCR…QRTH), 436–458 (FQCT…QRTH), 464–486 (CKCD…EKIH), 492–514 (YKCP…QRVH), and 520–542 (YKCS…QRSH).

The protein belongs to the krueppel C2H2-type zinc-finger protein family.

Its subcellular location is the nucleus. Functionally, may be involved in transcriptional regulation. The sequence is that of Zinc finger protein 18 (ZNF18) from Homo sapiens (Human).